The primary structure comprises 65 residues: Protein translocase subunit SecE (65 aa).

Over 1 to 34 (MEKLRKFFREVIAEAKKISWPSRKELLTSFGVVL) the chain is Cytoplasmic. Residues 35–51 (VILAVTSVYFFVLDFIF) form a helical membrane-spanning segment. Topologically, residues 52-65 (SGVVSAIFKALGIG) are extracellular.

This sequence belongs to the SecE/SEC61-gamma family. As to quaternary structure, component of the Sec protein translocase complex. Heterotrimer consisting of SecY, SecE and SecG subunits. The heterotrimers can form oligomers, although 1 heterotrimer is thought to be able to translocate proteins. Interacts with SecDF, and other proteins may be involved. The channel interacts with SecA via subunit SecY.

It is found in the cell inner membrane. Its function is as follows. Essential subunit of the protein translocation channel SecYEG. Clamps together the 2 halves of SecY. May contact the channel plug during translocation. In Thermotoga maritima (strain ATCC 43589 / DSM 3109 / JCM 10099 / NBRC 100826 / MSB8), this protein is Protein translocase subunit SecE.